The chain runs to 88 residues: Putative cancer susceptibility gene HEPN1 protein (88 aa).

Expressed in liver. Expression is either down-regulated or lost in hepatocellular carcinomas (HCC).

The protein resides in the cytoplasm. This chain is Putative cancer susceptibility gene HEPN1 protein (HEPN1), found in Homo sapiens (Human).